A 140-amino-acid polypeptide reads, in one-letter code: Fluoride-specific ion channel FluC 1 (140 aa).

4 helical membrane passes run 3-23, 38-58, 80-100, and 113-133; these read TGAT…GAAA, APLW…GLVL, ILYP…STVM, and IAGV…ALWC. Na(+)-binding residues include Gly91 and Thr94.

It belongs to the fluoride channel Fluc/FEX (TC 1.A.43) family.

It localises to the cell membrane. The enzyme catalyses fluoride(in) = fluoride(out). Na(+) is not transported, but it plays an essential structural role and its presence is essential for fluoride channel function. In terms of biological role, fluoride-specific ion channel. Important for reducing fluoride concentration in the cell, thus reducing its toxicity. The sequence is that of Fluoride-specific ion channel FluC 1 from Corynebacterium jeikeium (strain K411).